Consider the following 166-residue polypeptide: Myeloid-derived growth factor (166 aa).

An N-terminal signal peptide occupies residues 1–24 (MAAPSGGFWTAVVLAAAALKLAAA).

This sequence belongs to the MYDGF family. Expressed in prostate, spleen and lung, and weakly expressed in the left ventricle (LF) and liver. Expressed predominantly in inflammatory cells, such as monocytes and macrophages, and weakly expressed in neutrophils, T-cells, B-cells, endothelial cells and cardiac myocytes, after myocardial infarction (MI) (at protein level).

It localises to the secreted. Its subcellular location is the endoplasmic reticulum-Golgi intermediate compartment. The protein resides in the endoplasmic reticulum. The protein localises to the golgi apparatus. Functionally, bone marrow-derived monocyte and paracrine-acting protein that promotes cardiac myocyte survival and adaptive angiogenesis for cardiac protection and/or repair after myocardial infarction (MI). Stimulates endothelial cell proliferation through a MAPK1/3-, STAT3- and CCND1-mediated signaling pathway. Inhibits cardiac myocyte apoptosis in a PI3K/AKT-dependent signaling pathway. This chain is Myeloid-derived growth factor, found in Mus musculus (Mouse).